The primary structure comprises 653 residues: 23S rRNA 5-hydroxycytidine C2501 synthase (653 aa).

It belongs to the peptidase U32 family. As to quaternary structure, interacts with precursors of the 50S ribosomal subunit.

With respect to regulation, iron-sulfur clusters and prephenate are required for ho5C2501 formation. Functionally, responsible for the formation of the 5-hydroxycytidine modification at the C2501 position (ho5C2501) of 23S rRNA. May be a Fe-S protein that catalyzes ho5C2501 formation using prephenate as a hydroxyl group donor. The chain is 23S rRNA 5-hydroxycytidine C2501 synthase from Escherichia coli (strain K12).